The primary structure comprises 347 residues: Protein N-terminal asparagine amidohydrolase (347 aa).

The catalysed reaction is N-terminal L-asparaginyl-[protein] + H2O + H(+) = N-terminal L-aspartyl-[protein] + NH4(+). Functionally, N-terminal asparagine deamidase that mediates deamidation of N-terminal asparagine residues to aspartate. Required for the ubiquitin-dependent turnover of intracellular proteins that initiate with Met-Asn. These proteins are acetylated on the retained initiator methionine and can subsequently be modified by the removal of N-acetyl methionine by acylaminoacid hydrolase (AAH). Conversion of the resulting N-terminal asparagine to aspartate by NTAN1 renders the protein susceptible to arginylation, polyubiquitination and degradation as specified by the N-end rule. This enzyme does not act on substrates with internal or C-terminal asparagines and does not act on glutamine residues in any position. Does not seem to be involved in immune response, unlike the N-terminal glutamine amidohydrolase NTAQ1. This Arabidopsis thaliana (Mouse-ear cress) protein is Protein N-terminal asparagine amidohydrolase.